Here is a 546-residue protein sequence, read N- to C-terminus: Thermosome subunit beta (546 aa).

This sequence belongs to the TCP-1 chaperonin family. In terms of assembly, forms a Heterooligomeric complex of two stacked eight-membered rings.

Molecular chaperone; binds unfolded polypeptides in vitro, and has a weak ATPase activity. This Thermococcus kodakarensis (strain ATCC BAA-918 / JCM 12380 / KOD1) (Pyrococcus kodakaraensis (strain KOD1)) protein is Thermosome subunit beta (thsB).